Consider the following 460-residue polypeptide: ATP synthase subunit beta (460 aa).

An ATP-binding site is contributed by 150 to 157; the sequence is GGAGVGKT.

This sequence belongs to the ATPase alpha/beta chains family. In terms of assembly, F-type ATPases have 2 components, CF(1) - the catalytic core - and CF(0) - the membrane proton channel. CF(1) has five subunits: alpha(3), beta(3), gamma(1), delta(1), epsilon(1). CF(0) has three main subunits: a(1), b(2) and c(9-12). The alpha and beta chains form an alternating ring which encloses part of the gamma chain. CF(1) is attached to CF(0) by a central stalk formed by the gamma and epsilon chains, while a peripheral stalk is formed by the delta and b chains.

It localises to the cell inner membrane. The catalysed reaction is ATP + H2O + 4 H(+)(in) = ADP + phosphate + 5 H(+)(out). Functionally, produces ATP from ADP in the presence of a proton gradient across the membrane. The catalytic sites are hosted primarily by the beta subunits. This is ATP synthase subunit beta from Yersinia pestis bv. Antiqua (strain Angola).